The chain runs to 424 residues: UPF0229 protein ECA2349 (424 aa).

The interval 53 to 111 (SIPNADINEPMFHQGRGGHRHRVHPGNDHFVQNDKIERPQGGGGSGSGQGDASKDGEGD) is disordered. A compositionally biased stretch (basic and acidic residues) spans 77-90 (PGNDHFVQNDKIER). Residues 92–101 (QGGGGSGSGQ) are compositionally biased toward gly residues.

It belongs to the UPF0229 family.

This Pectobacterium atrosepticum (strain SCRI 1043 / ATCC BAA-672) (Erwinia carotovora subsp. atroseptica) protein is UPF0229 protein ECA2349.